A 352-amino-acid chain; its full sequence is 3-isopropylmalate dehydrogenase (352 aa).

71–87 contacts NAD(+); that stretch reads GAHDSAWNQLPRHLRPE. Substrate contacts are provided by R94, R104, R132, and D218. Residues D218, D242, and D246 each coordinate Mg(2+). An NAD(+)-binding site is contributed by 275-287; that stretch reads GSAPDIAGQGVAN.

Belongs to the isocitrate and isopropylmalate dehydrogenases family. LeuB type 1 subfamily. Homodimer. Requires Mg(2+) as cofactor. The cofactor is Mn(2+).

The protein resides in the cytoplasm. The enzyme catalyses (2R,3S)-3-isopropylmalate + NAD(+) = 4-methyl-2-oxopentanoate + CO2 + NADH. The protein operates within amino-acid biosynthesis; L-leucine biosynthesis; L-leucine from 3-methyl-2-oxobutanoate: step 3/4. In terms of biological role, catalyzes the oxidation of 3-carboxy-2-hydroxy-4-methylpentanoate (3-isopropylmalate) to 3-carboxy-4-methyl-2-oxopentanoate. The product decarboxylates to 4-methyl-2 oxopentanoate. The chain is 3-isopropylmalate dehydrogenase from Deinococcus radiodurans (strain ATCC 13939 / DSM 20539 / JCM 16871 / CCUG 27074 / LMG 4051 / NBRC 15346 / NCIMB 9279 / VKM B-1422 / R1).